The chain runs to 180 residues: Glycodelin (180 aa).

A signal peptide spans 1-18 (MLCLLLTLGVALVCGVPA). Residues asparagine 46 and asparagine 81 are each glycosylated (N-linked (GlcNAc...) (complex) asparagine). Disulfide bonds link cysteine 84–cysteine 178 and cysteine 124–cysteine 137.

This sequence belongs to the calycin superfamily. Lipocalin family. As to quaternary structure, homodimer. Post-translationally, four distinct glycoforms A, C, F and S arise from different N-linked oligosaccharide chains at amino acid residues Asn-46 and Asn-81. Glycodelin-A and -F are taken up by the cumulus cells in which partial deglycosylation takes place to produce glycodelin-C. As to expression, this protein is, the main protein synthesized and secreted in the endometrium from mid-luteal phase of the menstrual cycle and during the first semester of pregnancy. Glycodelin-A is expressed in amniotic fluid, endometrium/decidua and maternal serum (at protein level). Glycodelin-F is expressed in follicular fluid, luteinized granulosa cells and the oviduct (at protein level). Glycodelin-S is expressed in seminal plasma and seminal vesicles (at protein level). Glycodelin-C is detected in cumulus cells (at protein level), but cumulus cells do not synthesize Glycodelin-C but take up and convert glycodelin-A and -F vis glycan remodeling.

Its subcellular location is the secreted. Glycoprotein that regulates critical steps during fertilization and also has immunomonomodulatory effects. Four glycoforms, namely glycodelin-S, -A, -F and -C have been identified in reproductive tissues that differ in glycosylation and biological activity. Glycodelin-A has contraceptive and immunosuppressive activities. Glycodelin-C stimulates binding of spermatozoa to the zona pellucida. Glycodelin-F inhibits spermatozoa-zona pellucida binding and significantly suppresses progesterone-induced acrosome reaction of spermatozoa. Glycodelin-S in seminal plasma maintains the uncapacitated state of human spermatozoa. The protein is Glycodelin (PAEP) of Homo sapiens (Human).